The primary structure comprises 231 residues: Type 3 secretion system stator protein (231 aa).

In terms of assembly, the core secretion machinery of the T3SS is composed of approximately 20 different proteins, including cytoplasmic components, a base, an export apparatus and a needle. This subunit is part of the cytosolic complex. Interacts directly with Spa47/SctN (T3SS ATPase) and Spa33/SctQ (the major sorting platform component). Homodimer in solution.

Its subcellular location is the cytoplasm. Its function is as follows. Component of the type III secretion system (T3SS), also called injectisome, which is used to inject bacterial effector proteins into eukaryotic host cells. Acts as a regulator of the Spa47/SctN ATPase activity. It down-regulates the ATPase activity of the oligomeric Spa47/SctN, while it up-regulates the activity of the monomeric form. Important for translocation of MxiH/SctF, the major needle component. This Shigella flexneri protein is Type 3 secretion system stator protein.